The chain runs to 142 residues: Large ribosomal subunit protein uL11 (142 aa).

This sequence belongs to the universal ribosomal protein uL11 family. As to quaternary structure, part of the ribosomal stalk of the 50S ribosomal subunit. Interacts with L10 and the large rRNA to form the base of the stalk. L10 forms an elongated spine to which L12 dimers bind in a sequential fashion forming a multimeric L10(L12)X complex. In terms of processing, one or more lysine residues are methylated.

In terms of biological role, forms part of the ribosomal stalk which helps the ribosome interact with GTP-bound translation factors. The polypeptide is Large ribosomal subunit protein uL11 (Xylella fastidiosa (strain 9a5c)).